Here is a 269-residue protein sequence, read N- to C-terminus: Glutamate racemase (269 aa).

Residues 14–15 and 46–47 contribute to the substrate site; these read DS and YS. The active-site Proton donor/acceptor is cysteine 78. 79–80 serves as a coordination point for substrate; that stretch reads NT. The active-site Proton donor/acceptor is the cysteine 189. 190–191 is a substrate binding site; that stretch reads TH.

This sequence belongs to the aspartate/glutamate racemases family.

The enzyme catalyses L-glutamate = D-glutamate. It participates in cell wall biogenesis; peptidoglycan biosynthesis. Its function is as follows. Provides the (R)-glutamate required for cell wall biosynthesis. This Haemophilus influenzae (strain ATCC 51907 / DSM 11121 / KW20 / Rd) protein is Glutamate racemase.